A 210-amino-acid polypeptide reads, in one-letter code: Large ribosomal subunit protein uL3 (210 aa).

The disordered stretch occupies residues 126–150 (VSATHGSHRNHRKPGSVGASSTPSR).

The protein belongs to the universal ribosomal protein uL3 family. Part of the 50S ribosomal subunit. Forms a cluster with proteins L14 and L19.

One of the primary rRNA binding proteins, it binds directly near the 3'-end of the 23S rRNA, where it nucleates assembly of the 50S subunit. This is Large ribosomal subunit protein uL3 from Tropheryma whipplei (strain TW08/27) (Whipple's bacillus).